The sequence spans 195 residues: FMN-dependent NADH:quinone oxidoreductase (195 aa).

Residues Ser-9, Ser-15–Ser-17, Met-85–Phe-88, and Ser-129–Gly-132 each bind FMN.

The protein belongs to the azoreductase type 1 family. In terms of assembly, homodimer. It depends on FMN as a cofactor.

It catalyses the reaction 2 a quinone + NADH + H(+) = 2 a 1,4-benzosemiquinone + NAD(+). The enzyme catalyses N,N-dimethyl-1,4-phenylenediamine + anthranilate + 2 NAD(+) = 2-(4-dimethylaminophenyl)diazenylbenzoate + 2 NADH + 2 H(+). Its function is as follows. Quinone reductase that provides resistance to thiol-specific stress caused by electrophilic quinones. Also exhibits azoreductase activity. Catalyzes the reductive cleavage of the azo bond in aromatic azo compounds to the corresponding amines. The chain is FMN-dependent NADH:quinone oxidoreductase from Stenotrophomonas maltophilia (strain K279a).